The chain runs to 44 residues: Somatoliberin (44 aa).

At L44 the chain carries Leucine amide.

Belongs to the glucagon family.

The protein localises to the secreted. In terms of biological role, GRF is released by the hypothalamus and acts on the adenohypophyse to stimulate the secretion of growth hormone. The sequence is that of Somatoliberin (GHRH) from Capra hircus (Goat).